Reading from the N-terminus, the 537-residue chain is 6-phosphogluconate dehydrogenase, decarboxylating 2, chloroplastic (537 aa).

The transit peptide at 1-44 (MRSEVPSSTSPSFLSPPFIHLPLLSLSSPTPLPHSSSSTFSLFS) directs the protein to the chloroplast. NADP(+)-binding positions include 55-60 (GLAVMG), 78-80 (NRT), 122-124 (VKA), and asparagine 150. Residues asparagine 150 and 176-178 (SGG) each bind substrate. Catalysis depends on lysine 230, which acts as the Proton acceptor. Substrate is bound at residue 233-234 (HN). The Proton donor role is filled by glutamate 237. Residues tyrosine 238, lysine 308, arginine 335, arginine 500, and histidine 506 each contribute to the substrate site.

Belongs to the 6-phosphogluconate dehydrogenase family. As to quaternary structure, homodimer.

It is found in the plastid. The protein resides in the chloroplast. The enzyme catalyses 6-phospho-D-gluconate + NADP(+) = D-ribulose 5-phosphate + CO2 + NADPH. It participates in carbohydrate degradation; pentose phosphate pathway; D-ribulose 5-phosphate from D-glucose 6-phosphate (oxidative stage): step 3/3. Its function is as follows. Catalyzes the oxidative decarboxylation of 6-phosphogluconate to ribulose 5-phosphate and CO(2), with concomitant reduction of NADP to NADPH. This is 6-phosphogluconate dehydrogenase, decarboxylating 2, chloroplastic from Spinacia oleracea (Spinach).